The chain runs to 191 residues: uncharacterized protein (191 aa).

It to B.subtilis GlpP.

This is an uncharacterized protein from Escherichia coli (strain K12).